A 138-amino-acid polypeptide reads, in one-letter code: Ribosome-binding factor A (138 aa).

Residues 112 to 138 (EARTQGQAPAADVEPAPGAAPDDEAEE) form a disordered region. A compositionally biased stretch (low complexity) spans 119 to 131 (APAADVEPAPGAA).

Belongs to the RbfA family. As to quaternary structure, monomer. Binds 30S ribosomal subunits, but not 50S ribosomal subunits or 70S ribosomes.

It is found in the cytoplasm. In terms of biological role, one of several proteins that assist in the late maturation steps of the functional core of the 30S ribosomal subunit. Associates with free 30S ribosomal subunits (but not with 30S subunits that are part of 70S ribosomes or polysomes). Required for efficient processing of 16S rRNA. May interact with the 5'-terminal helix region of 16S rRNA. This is Ribosome-binding factor A from Anaeromyxobacter sp. (strain K).